Here is a 497-residue protein sequence, read N- to C-terminus: 4,4'-diaponeurosporene oxygenase (497 aa).

Residue 7 to 19 (VIGGGLGGISAAI) coordinates FAD.

This sequence belongs to the carotenoid/retinoid oxidoreductase family. CrtP subfamily. It depends on FAD as a cofactor.

The enzyme catalyses all-trans-4,4'-diaponeurosporene + 2 AH2 + 2 O2 = 4,4'-diaponeurosporenal + 2 A + 3 H2O. Its pathway is carotenoid biosynthesis; staphyloxanthin biosynthesis; staphyloxanthin from farnesyl diphosphate: step 3/5. In terms of biological role, involved in the biosynthesis of the yellow-orange carotenoid staphyloxanthin, which plays a role in the virulence via its protective function against oxidative stress. Catalyzes the oxidation of the terminal methyl side group of 4,4'-diaponeurosporene to form 4,4'-diaponeurosporen-4-al. The sequence is that of 4,4'-diaponeurosporene oxygenase from Staphylococcus aureus (strain bovine RF122 / ET3-1).